We begin with the raw amino-acid sequence, 275 residues long: NH(3)-dependent NAD(+) synthetase (275 aa).

ATP is bound at residue 50-57 (GISGGVDS). Residue D56 coordinates Mg(2+). R147 serves as a coordination point for deamido-NAD(+). Residue T167 coordinates ATP. E172 contacts Mg(2+). K180 and D187 together coordinate deamido-NAD(+). ATP-binding residues include K196 and T218. 267–268 (HK) is a deamido-NAD(+) binding site.

Belongs to the NAD synthetase family. Homodimer.

The catalysed reaction is deamido-NAD(+) + NH4(+) + ATP = AMP + diphosphate + NAD(+) + H(+). It participates in cofactor biosynthesis; NAD(+) biosynthesis; NAD(+) from deamido-NAD(+) (ammonia route): step 1/1. Catalyzes the ATP-dependent amidation of deamido-NAD to form NAD. Uses ammonia as a nitrogen source. This is NH(3)-dependent NAD(+) synthetase from Pseudomonas aeruginosa (strain UCBPP-PA14).